We begin with the raw amino-acid sequence, 463 residues long: Glutamyl-tRNA(Gln) amidotransferase subunit A, mitochondrial (463 aa).

Residues K47 and S124 each act as charge relay system in the active site. The active-site Acyl-ester intermediate is S148.

This sequence belongs to the amidase family. GatA subfamily. As to quaternary structure, subunit of the heterotrimeric GatFAB amidotransferase (AdT) complex, composed of A, B and F subunits.

The protein localises to the mitochondrion. It carries out the reaction L-glutamyl-tRNA(Gln) + L-glutamine + ATP + H2O = L-glutaminyl-tRNA(Gln) + L-glutamate + ADP + phosphate + H(+). Its function is as follows. Allows the formation of correctly charged Gln-tRNA(Gln) through the transamidation of misacylated Glu-tRNA(Gln) in the mitochondria. The reaction takes place in the presence of glutamine and ATP through an activated gamma-phospho-Glu-tRNA(Gln). This Eremothecium gossypii (strain ATCC 10895 / CBS 109.51 / FGSC 9923 / NRRL Y-1056) (Yeast) protein is Glutamyl-tRNA(Gln) amidotransferase subunit A, mitochondrial.